We begin with the raw amino-acid sequence, 353 residues long: A-kinase anchor protein 7 isoforms delta and gamma (353 aa).

Composition is skewed to basic and acidic residues over residues 1–22 and 66–76; these read MERP…RGEE and RSKENRGDRND. 2 disordered regions span residues 1–33 and 47–85; these read MERP…SPVG and DDCG…KKAK. AMP contacts are provided by residues T134 and 224-226; that span reads HLT. CMP is bound by residues T134 and 224 to 226; that span reads HLT. Positions 299 to 353 are PKA-RII-alpha subunit binding domain; the sequence is AELVRLSKRLVENAVLKAVQQYLEETQNKKQPGEGNSVKAEEGDRNGDGSDNNRK. The segment at 300-324 is RI-alpha-binding; that stretch reads ELVRLSKRLVENAVLKAVQQYLEET. An RII-binding region spans residues 301–314; it reads LVRLSKRLVENAVL. Positions 321 to 353 are disordered; it reads LEETQNKKQPGEGNSVKAEEGDRNGDGSDNNRK. Basic and acidic residues predominate over residues 337–353; sequence KAEEGDRNGDGSDNNRK.

In terms of assembly, binds cAMP-dependent protein kinase (PKA). Interacts with PRKCA; only the cytoplasmic form is capable of interacting with PRKCA. As to expression, expressed highly in the heart, and moderately in brain, lung, liver, kidney and testis. Hardly detectable in spleen and skeletal muscle. In kidney, isoform Delta is expressed in the principal cells of the IMCD.

The protein localises to the nucleus. The protein resides in the cytoplasm. It is found in the cell membrane. Probably targets cAMP-dependent protein kinase (PKA) to the cellular membrane or cytoskeletal structures. The membrane-associated form reduces epithelial sodium channel (ENaC) activity, whereas the free cytoplasmic form may negatively regulate ENaC channel feedback inhibition by intracellular sodium. Isoform Delta may be involved in shuttling aquaporin-2 (AQP2) to the plasma membrane. The protein is A-kinase anchor protein 7 isoforms delta and gamma of Rattus norvegicus (Rat).